The primary structure comprises 222 residues: Glutathione transferase GST 23 (222 aa).

A GST N-terminal domain is found at 4 to 83 (KGVKVLGMWA…YIDEVWKGGY (80 aa)). Glutathione contacts are provided by residues Ser14, Lys41, Val55, and 67-68 (ES). The region spanning 89–220 (DPYERAQARF…ANKARREQLL (132 aa)) is the GST C-terminal domain.

Belongs to the GST superfamily.

It catalyses the reaction RX + glutathione = an S-substituted glutathione + a halide anion + H(+). In terms of biological role, involved in multiple disease resistance (MDR). The chain is Glutathione transferase GST 23 from Zea mays (Maize).